Here is a 138-residue protein sequence, read N- to C-terminus: Nucleoside diphosphate kinase (138 aa).

Lys9, Phe57, Arg85, Thr91, Arg102, and Asn112 together coordinate ATP. The active-site Pros-phosphohistidine intermediate is His115.

Belongs to the NDK family. As to quaternary structure, homotetramer. It depends on Mg(2+) as a cofactor.

The protein resides in the cytoplasm. The catalysed reaction is a 2'-deoxyribonucleoside 5'-diphosphate + ATP = a 2'-deoxyribonucleoside 5'-triphosphate + ADP. It catalyses the reaction a ribonucleoside 5'-diphosphate + ATP = a ribonucleoside 5'-triphosphate + ADP. Its function is as follows. Major role in the synthesis of nucleoside triphosphates other than ATP. The ATP gamma phosphate is transferred to the NDP beta phosphate via a ping-pong mechanism, using a phosphorylated active-site intermediate. This is Nucleoside diphosphate kinase from Desulforapulum autotrophicum (strain ATCC 43914 / DSM 3382 / VKM B-1955 / HRM2) (Desulfobacterium autotrophicum).